A 190-amino-acid polypeptide reads, in one-letter code: Translation initiation factor IF-3 (190 aa).

Belongs to the IF-3 family. Monomer.

It is found in the cytoplasm. Its function is as follows. IF-3 binds to the 30S ribosomal subunit and shifts the equilibrium between 70S ribosomes and their 50S and 30S subunits in favor of the free subunits, thus enhancing the availability of 30S subunits on which protein synthesis initiation begins. The polypeptide is Translation initiation factor IF-3 (Prochlorococcus marinus (strain AS9601)).